A 491-amino-acid polypeptide reads, in one-letter code: Ketol-acid reductoisomerase (NADP(+)) (491 aa).

Positions Ala15–Ser208 constitute a KARI N-terminal Rossmann domain. NADP(+) is bound by residues Cys45–Gln48, Arg68, Arg76, Ser78, and Asp108–Gln110. His132 is an active-site residue. Residue Gly158 participates in NADP(+) binding. 2 KARI C-terminal knotted domains span residues Ser209 to Gln344 and Tyr345 to Met484. Positions 217, 221, 389, and 393 each coordinate Mg(2+). Residue Ser414 coordinates substrate.

It belongs to the ketol-acid reductoisomerase family. Requires Mg(2+) as cofactor.

The catalysed reaction is (2R)-2,3-dihydroxy-3-methylbutanoate + NADP(+) = (2S)-2-acetolactate + NADPH + H(+). It carries out the reaction (2R,3R)-2,3-dihydroxy-3-methylpentanoate + NADP(+) = (S)-2-ethyl-2-hydroxy-3-oxobutanoate + NADPH + H(+). Its pathway is amino-acid biosynthesis; L-isoleucine biosynthesis; L-isoleucine from 2-oxobutanoate: step 2/4. The protein operates within amino-acid biosynthesis; L-valine biosynthesis; L-valine from pyruvate: step 2/4. Its function is as follows. Involved in the biosynthesis of branched-chain amino acids (BCAA). Catalyzes an alkyl-migration followed by a ketol-acid reduction of (S)-2-acetolactate (S2AL) to yield (R)-2,3-dihydroxy-isovalerate. In the isomerase reaction, S2AL is rearranged via a Mg-dependent methyl migration to produce 3-hydroxy-3-methyl-2-ketobutyrate (HMKB). In the reductase reaction, this 2-ketoacid undergoes a metal-dependent reduction by NADPH to yield (R)-2,3-dihydroxy-isovalerate. The sequence is that of Ketol-acid reductoisomerase (NADP(+)) from Klebsiella pneumoniae (strain 342).